Here is a 64-residue protein sequence, read N- to C-terminus: Large ribosomal subunit protein bL35 (64 aa).

The interval 1–20 is disordered; that stretch reads MKQKTHKGTAKRIKVTGSGK.

Belongs to the bacterial ribosomal protein bL35 family.

This is Large ribosomal subunit protein bL35 from Corynebacterium urealyticum (strain ATCC 43042 / DSM 7109).